The sequence spans 100 residues: Large ribosomal subunit protein bL27 (100 aa).

Positions 1-13 (MNKLYWLTDLQLF) are excised as a propeptide. A disordered region spans residues 17 to 39 (KGVGSSKNGRDSNPKYLGAKLGD).

This sequence belongs to the bacterial ribosomal protein bL27 family. In terms of processing, the N-terminus is cleaved by ribosomal processing cysteine protease Prp.

The chain is Large ribosomal subunit protein bL27 from Ureaplasma parvum serovar 3 (strain ATCC 700970).